The chain runs to 184 residues: Large ribosomal subunit protein uL5 (184 aa).

It belongs to the universal ribosomal protein uL5 family. In terms of assembly, part of the 50S ribosomal subunit; part of the 5S rRNA/L5/L18/L25 subcomplex. Contacts the 5S rRNA and the P site tRNA. Forms a bridge to the 30S subunit in the 70S ribosome.

In terms of biological role, this is one of the proteins that bind and probably mediate the attachment of the 5S RNA into the large ribosomal subunit, where it forms part of the central protuberance. In the 70S ribosome it contacts protein S13 of the 30S subunit (bridge B1b), connecting the 2 subunits; this bridge is implicated in subunit movement. Contacts the P site tRNA; the 5S rRNA and some of its associated proteins might help stabilize positioning of ribosome-bound tRNAs. The chain is Large ribosomal subunit protein uL5 from Syntrophotalea carbinolica (strain DSM 2380 / NBRC 103641 / GraBd1) (Pelobacter carbinolicus).